The primary structure comprises 279 residues: MDKIKIITDSTCDLSKEIIEKYDIDVMPMLINFGEESYLDGVEIKVDSMMERIEREDTLPTTAQIVPTRFIEKYKGYLEEGYKVISIHISSNMSGTYQSACLAKTELESDDIVVIDSRNVTVGLGLIILKAARLIESGITLEDLEKEILEYRNHIKSTIAFESLDNLVRGGRLSKGKALFVSALGIKLMLNVLDGEMNVQGKIRGTKKMVKAMIEQFDSIPKKEGEPIILVELENEDIYLPIKEYLENNNIEYLKLPLGCSVAIHSGPKVCALFYVEEY.

Positions 4 to 277 (IKIITDSTCD…PKVCALFYVE (274 aa)) constitute a DegV domain. The hexadecanoate site is built by Thr-62 and Ser-94.

In terms of biological role, may bind long-chain fatty acids, such as palmitate, and may play a role in lipid transport or fatty acid metabolism. In Clostridium perfringens (strain 13 / Type A), this protein is DegV domain-containing protein CPE1310.